The primary structure comprises 566 residues: Probable F-box protein At5g39490 (566 aa).

One can recognise an F-box domain in the interval 8–54 (ACLLLMLPEDIFVVISRFLSPSDICNLILCGKSLRALVDSEKTWLVQ). The tract at residues 318-338 (LRKSSSSKNTTPSQSEIRHSN) is disordered. Residues 320 to 332 (KSSSSKNTTPSQS) show a composition bias toward low complexity.

In Arabidopsis thaliana (Mouse-ear cress), this protein is Probable F-box protein At5g39490.